The sequence spans 270 residues: MATPQPVDARTQPWRETPGGDLVALGRPVRQALHLVRHNPAQGRVLSRRETILLVLFALTLHGAVIHWLSQQRTPALPEVPPQVPPMTIEFTAPAPPVVEPPPPEPLPPVVEEPPPPVVDENAVKPPPPKPVPKPKPKPKPQPRPKPAPKAVEPAPPAPPQPAAPPAPPAPAAAPAPLTPPSANAGYLHNPAPEYPALAMRRGWEGTVLLRVHVLASGSPSEIQVQKSSGREALDQAAVKAVKRWSFVPAKRGDKAEDGWVSVPIDFKLN.

Topologically, residues 1–51 (MATPQPVDARTQPWRETPGGDLVALGRPVRQALHLVRHNPAQGRVLSRRET) are cytoplasmic. The helical transmembrane segment at 52 to 69 (ILLVLFALTLHGAVIHWL) threads the bilayer. The Periplasmic portion of the chain corresponds to 70–270 (SQQRTPALPE…VSVPIDFKLN (201 aa)). A disordered region spans residues 80-187 (VPPQVPPMTI…LTPPSANAGY (108 aa)). The segment covering 94-118 (PAPPVVEPPPPEPLPPVVEEPPPPV) has biased composition (pro residues). Positions 133-143 (PKPKPKPKPQP) are enriched in basic residues. Positions 144 to 180 (RPKPAPKAVEPAPPAPPQPAAPPAPPAPAAAPAPLTP) are enriched in pro residues. Residues 180–270 (PPSANAGYLH…VSVPIDFKLN (91 aa)) form the TonB C-terminal domain.

The protein belongs to the TonB family. In terms of assembly, homodimer. Forms a complex with the accessory proteins ExbB and ExbD.

The protein localises to the cell inner membrane. Its function is as follows. Interacts with outer membrane receptor proteins that carry out high-affinity binding and energy dependent uptake into the periplasmic space of specific substrates. It could act to transduce energy from the cytoplasmic membrane to specific energy-requiring processes in the outer membrane, resulting in the release into the periplasm of ligands bound by these outer membrane proteins. The protein is Protein tonB2 (tonB2) of Pseudomonas aeruginosa (strain ATCC 15692 / DSM 22644 / CIP 104116 / JCM 14847 / LMG 12228 / 1C / PRS 101 / PAO1).